A 324-amino-acid polypeptide reads, in one-letter code: Putative S-adenosyl-L-methionine-dependent methyltransferase MMAR_1059 (324 aa).

Residues Asp138 and 167–168 (DL) each bind S-adenosyl-L-methionine.

Belongs to the UPF0677 family.

Functionally, exhibits S-adenosyl-L-methionine-dependent methyltransferase activity. In Mycobacterium marinum (strain ATCC BAA-535 / M), this protein is Putative S-adenosyl-L-methionine-dependent methyltransferase MMAR_1059.